The chain runs to 952 residues: Anion exchange protein 4 (952 aa).

Residues 1 to 41 (MKLPGQGDFESSDAHENAHSEEPDSGLGPGPGLNGPSGIDI) form a disordered region. Basic and acidic residues predominate over residues 12–22 (SDAHENAHSEE). A run of 4 helical transmembrane segments spans residues 385 to 405 (AVFY…GLLG), 413 to 433 (GVLE…LMAG), 470 to 490 (VGIW…SLLV), and 501 to 521 (FCAL…LNLI). 2 N-linked (GlcNAc...) asparagine glycosylation sites follow: N546 and N569. Helical transmembrane passes span 593–613 (VPDI…CAIA), 634–654 (FSSV…GLAT), 681–701 (PWWL…LIFM), 727–747 (LFCV…WYVS), 784–804 (GLVV…LKFI), 807–827 (PVLY…IQFV), and 870–890 (VVKS…LVAI). Residues 915-938 (ETIPENRSEPEHLFSGNDSEDSEL) are disordered. N-linked (GlcNAc...) asparagine glycosylation is found at N920, N931, and N948.

This sequence belongs to the anion exchanger (TC 2.A.31) family. Expressed in submandibular gland (SMG) duct and cortical collecting duct (CCD) of kidney. Lower expressed in duodenal villi.

The protein localises to the basolateral cell membrane. The enzyme catalyses 2 hydrogencarbonate(out) + chloride(in) + Na(+)(out) = 2 hydrogencarbonate(in) + chloride(out) + Na(+)(in). It carries out the reaction K(+)(in) + 2 hydrogencarbonate(in) + chloride(out) = K(+)(out) + 2 hydrogencarbonate(out) + chloride(in). The catalysed reaction is Li(+)(in) + 2 hydrogencarbonate(in) + chloride(out) = Li(+)(out) + 2 hydrogencarbonate(out) + chloride(in). It catalyses the reaction Rb(+)(in) + 2 hydrogencarbonate(in) + chloride(out) = Rb(+)(out) + 2 hydrogencarbonate(out) + chloride(in). The enzyme catalyses Cs(+)(in) + 2 hydrogencarbonate(in) + chloride(out) = Cs(+)(out) + 2 hydrogencarbonate(out) + chloride(in). Cl(-)/HCO3(-) exchanger activity is substantially increased in response to 5 uM isoproterenol. Cl(-)/HCO3(-) exchanger activity is increased by both forskolin and coexpression with the catalytic subunit alpha of PKA. Functionally, electroneutral Cl(-)/HCO3(-) antiporter that favors chloride ion entry and efflux of hydrogencarbonate and sodium ion across the basolateral membrane and may participate in salivary secretion. Also mediates Cl(-)/HCO3(-) exchange activity in the presence of K(+) as well as Cs(+), Li(+), and Rb(+). Does not contribute to Cl(-)/HCO3(-) exchanger in the apical membrane of the upper villous epithelium. The protein is Anion exchange protein 4 of Mus musculus (Mouse).